Consider the following 427-residue polypeptide: Glutamate-1-semialdehyde 2,1-aminomutase (427 aa).

Lys266 bears the N6-(pyridoxal phosphate)lysine mark.

Belongs to the class-III pyridoxal-phosphate-dependent aminotransferase family. HemL subfamily. Homodimer. Pyridoxal 5'-phosphate is required as a cofactor.

Its subcellular location is the cytoplasm. It carries out the reaction (S)-4-amino-5-oxopentanoate = 5-aminolevulinate. The protein operates within porphyrin-containing compound metabolism; protoporphyrin-IX biosynthesis; 5-aminolevulinate from L-glutamyl-tRNA(Glu): step 2/2. The protein is Glutamate-1-semialdehyde 2,1-aminomutase of Dechloromonas aromatica (strain RCB).